The following is a 654-amino-acid chain: MGKCSALMIFLSSSLLLVLQTLHVVNAVKCFGNSFNGNSSTFAQNRQKLFPTLADKVIINDGFYNASLGQDPDKVYALVSCARGYDQDACYNCVQSLTQNTLTDCRSRRDSFIWGGNDDVTCLVRSSNQSTFGSVQLKPPVVWPSPDTIESSKNITLFKQQWEEMVNRTLEAATKAEGSSVLKYYKAEKAGFTEFPDVYMLMQCTPDLSSRDCKQCLGDCVMYFRKDYMGRKGGMASLPSCYFRWDLYSFHNAFDNVTRVPAPPPRPHAQEKESCITVKKGKSIGYGGIIAIVVVFTFINLLVFIGFIKVYARRGKLNNVGSAEYSDSDGQFMLRFDLGMIVMATDDFSSENTLGQGGFGTVYKGTFPNGQEVAVKRLTKGSGQGDMEFKNEVSLLTRLQHKNLVKLLGFCNEGDEEILVYEFVPNSSLDHFIFDEDKRSLLTWEVRFRIIEGIARGLLYLHEDSQLKIIHRDLKASNILLDAEMNPKVADFGTARLFDSDETRAETKRIAGTRGYMAPEYLNHGQISAKSDVYSFGVMLLEMISGERNNSFEGEGLAAFAWKRWVEGKPEIIIDPFLIENPRNEIIKLIQIGLLCVQENSTKRPTMSSVIIWLGSETIIIPLPKAPAFTWIRSQSESGAMSLSDDVFTELSCR.

An N-terminal signal peptide occupies residues 1–27 (MGKCSALMIFLSSSLLLVLQTLHVVNA). 2 Gnk2-homologous domains span residues 28–131 (VKCF…NQST) and 143–250 (WPSP…LYSF). Residues 28–287 (VKCFGNSFNG…VKKGKSIGYG (260 aa)) are Extracellular-facing. N-linked (GlcNAc...) asparagine glycosylation is found at asparagine 38, asparagine 65, asparagine 128, asparagine 154, asparagine 167, and asparagine 256. Residues 288–308 (GIIAIVVVFTFINLLVFIGFI) form a helical membrane-spanning segment. At 309–654 (KVYARRGKLN…DDVFTELSCR (346 aa)) the chain is on the cytoplasmic side. Residues 348–619 (FSSENTLGQG…VIIWLGSETI (272 aa)) enclose the Protein kinase domain. Residues 354–362 (LGQGGFGTV) and lysine 376 contribute to the ATP site. Position 421 is a phosphotyrosine (tyrosine 421). Catalysis depends on aspartate 473, which acts as the Proton acceptor. A Phosphoserine modification is found at serine 477. Threonine 513 is modified (phosphothreonine). The residue at position 521 (tyrosine 521) is a Phosphotyrosine.

This sequence belongs to the protein kinase superfamily. Ser/Thr protein kinase family. CRK subfamily.

Its subcellular location is the membrane. It catalyses the reaction L-seryl-[protein] + ATP = O-phospho-L-seryl-[protein] + ADP + H(+). It carries out the reaction L-threonyl-[protein] + ATP = O-phospho-L-threonyl-[protein] + ADP + H(+). The protein is Cysteine-rich receptor-like protein kinase 40 (CRK40) of Arabidopsis thaliana (Mouse-ear cress).